Consider the following 217-residue polypeptide: Oxygen regulatory protein NreC (217 aa).

The Response regulatory domain maps to 2–119 (KIVIADDHAV…QLLLAVRTVY (118 aa)). Asp53 carries the post-translational modification 4-aspartylphosphate. The 66-residue stretch at 148–213 (TNDPFKILSK…ELVEYALKKK (66 aa)) folds into the HTH luxR-type domain. Positions 172–191 (NKDIAEKLFVSVKTVEAHKT) form a DNA-binding region, H-T-H motif.

In terms of processing, phosphorylated by NreB.

It is found in the cytoplasm. Its function is as follows. Member of the two-component regulatory system NreB/NreC involved in the control of dissimilatory nitrate/nitrite reduction in response to oxygen. Phosphorylated NreC binds to a GC-rich palindromic sequence at the promoters of the nitrate (narGHJI) and nitrite (nir) reductase operons, as well as the putative nitrate transporter gene narT, and activates their expression. This chain is Oxygen regulatory protein NreC (nreC), found in Staphylococcus haemolyticus (strain JCSC1435).